Reading from the N-terminus, the 475-residue chain is Gamma-aminobutyric acid receptor subunit gamma-2 (475 aa).

The first 39 residues, 1-39, serve as a signal peptide directing secretion; the sequence is MSSPNIWSTGSSVYSTPVFSQKMTVWILLLLSLYPGFTS. Residues 40 to 275 lie on the Extracellular side of the membrane; that stretch reads QKSDDDYEDY…FDLSRRMGYF (236 aa). Asn52 and Asn129 each carry an N-linked (GlcNAc...) asparagine glycan. A disulfide bond links Cys190 and Cys204. N-linked (GlcNAc...) asparagine glycosylation is present at Asn247. Residues 276 to 296 traverse the membrane as a helical segment; that stretch reads TIQTYIPCTLIVVLSWVSFWI. Over 297–302 the chain is Cytoplasmic; sequence NKDAVP. A helical transmembrane segment spans residues 303–322; sequence ARTSLGITTVLTMTTLSTIA. At 323 to 334 the chain is on the extracellular side; it reads RKSLPKVSYVTA. A helical transmembrane segment spans residues 335–359; sequence MDLFVSVCFIFVFSALVEYGTLHYF. Residues 360-451 are Cytoplasmic-facing; it reads VSNRKPSKDK…IHIRIAKMDS (92 aa). An interaction with GABARAP region spans residues 433–450; that stretch reads RTGAWRHGRIHIRIAKMD. The chain crosses the membrane as a helical span at residues 452–472; that stretch reads YARIFFPTAFCLFNLVYWVSY. Residues 473 to 475 are Extracellular-facing; sequence LYL.

Belongs to the ligand-gated ion channel (TC 1.A.9) family. Gamma-aminobutyric acid receptor (TC 1.A.9.5) subfamily. GABRG2 sub-subfamily. Heteropentamer, formed by a combination of alpha (GABRA1-6), beta (GABRB1-3), gamma (GABRG1-3), delta (GABRD), epsilon (GABRE), rho (GABRR1-3), pi (GABRP) and theta (GABRQ) chains, each subunit exhibiting distinct physiological and pharmacological properties. Interacts with GABARAP. Interacts with KIF21B. Identified in a complex of 720 kDa composed of LHFPL4, NLGN2, GABRA1, GABRB2, GABRG2 and GABRB3. Interacts with LHFPL4. Interacts with SHISA7; interaction leads to the regulation of GABA(A) receptor trafficking, channel deactivation kinetics and pharmacology. Palmitoylated by ZDHHC3/GODZ; required for the accumulation of GABA(A) receptors at the postsynaptic membrane of inhibitory GABAergic synapses.

Its subcellular location is the postsynaptic cell membrane. It is found in the cell membrane. The protein localises to the cell projection. It localises to the dendrite. The protein resides in the cytoplasmic vesicle membrane. The catalysed reaction is chloride(in) = chloride(out). Allosterically activated by benzodiazepines. Activated by pentobarbital. Potentiated by etomidate, propofol, pregnanolone. Inhibited by the antagonist bicuculline. Inhibited by zinc ions. Potentiated by histamine. Gamma subunit of the heteropentameric ligand-gated chloride channel gated by gamma-aminobutyric acid (GABA), a major inhibitory neurotransmitter in the brain. GABA-gated chloride channels, also named GABA(A) receptors (GABAAR), consist of five subunits arranged around a central pore and contain GABA active binding site(s) located at the alpha and beta subunit interface(s). When activated by GABA, GABAARs selectively allow the flow of chloride anions across the cell membrane down their electrochemical gradient. Gamma-2/GABRG2-containing GABAARs are found at both synaptic and extrasynaptic sites. Chloride influx into the postsynaptic neuron following GABAAR opening decreases the neuron ability to generate a new action potential, thereby reducing nerve transmission. GABAARs containing alpha-1 and beta-2 or -3 subunits exhibit synaptogenic activity; the gamma-2 subunit being necessary but not sufficient to induce rapid synaptic contacts formation. Extrasynaptic gamma-2-containing receptors contribute to the tonic GABAergic inhibition. GABAARs function also as histamine receptor where histamine binds at the interface of two neighboring beta subunits and potentiates GABA response in a gamma-2 subunit-controlled manner. In Homo sapiens (Human), this protein is Gamma-aminobutyric acid receptor subunit gamma-2.